Reading from the N-terminus, the 402-residue chain is Endoplasmic reticulum junction formation protein lunapark-B (402 aa).

The Cytoplasmic portion of the chain corresponds to 1 to 45; the sequence is MGAIISRWKTKPSTVELLESLDKDIKDLEEFRAKNQRLLKLWVGR. Residues 46 to 66 traverse the membrane as a helical segment; that stretch reads LLFYSSALYLLTCLCVYYLYF. The Lumenal portion of the chain corresponds to 67 to 77; that stretch reads PQQWGARLITA. The chain crosses the membrane as a helical span at residues 78-98; it reads LPLLAFPALVLLLRKMLIFLF. Topologically, residues 99-402 are cytoplasmic; it reads SKRTERNNDK…EEQKKEDESN (304 aa). Positions 100 to 128 form a coiled coil; the sequence is KRTERNNDKLEDLKTQKRKILEEVMETET. Residues 142–240 form a disordered region; sequence ESKKKAEAEA…PGPGSGMRPP (99 aa). Residues 205-222 show a composition bias toward polar residues; it reads SASTPAGASQAETPQQMM. Residues 276 to 301 form a C4-type; plays a role in ER morphology zinc finger; it reads CQQCFSHNGMALKEEFEFVAFRCAYC. Residues 311 to 402 are disordered; it reads RPQAPRLPEF…EEQKKEDESN (92 aa). Residues 321-330 show a composition bias toward basic and acidic residues; sequence SFERRLRSES. Positions 341–352 are enriched in acidic residues; sequence TPEDSDAPEDDM. A compositionally biased stretch (basic and acidic residues) spans 385–402; it reads PHAEAEALEEQKKEDESN.

The protein belongs to the lunapark family. In terms of assembly, homodimer; homodimerization requires the C4-type zinc finger motif and decreases during mitosis in a phosphorylation-dependent manner. In terms of processing, phosphorylated. Phosphorylation occurs during interphase. Phosphorylation also occurs during mitosis; these phosphorylations reduce both its homodimerization and the ER three-way tubular junction formation.

It localises to the endoplasmic reticulum membrane. Its function is as follows. Endoplasmic reticulum (ER)-shaping membrane protein that plays a role in determining ER morphology. Involved in the stabilization of nascent three-way ER tubular junctions within the ER network. May also play a role as a curvature-stabilizing protein within three-way ER tubular junction network. This is Endoplasmic reticulum junction formation protein lunapark-B (lnpkb) from Danio rerio (Zebrafish).